Here is a 450-residue protein sequence, read N- to C-terminus: Glucose-6-phosphate isomerase (450 aa).

The active-site Proton donor is the Glu291. Residues His312 and Lys426 contribute to the active site.

Belongs to the GPI family.

The protein resides in the cytoplasm. The enzyme catalyses alpha-D-glucose 6-phosphate = beta-D-fructose 6-phosphate. The protein operates within carbohydrate biosynthesis; gluconeogenesis. It participates in carbohydrate degradation; glycolysis; D-glyceraldehyde 3-phosphate and glycerone phosphate from D-glucose: step 2/4. In terms of biological role, catalyzes the reversible isomerization of glucose-6-phosphate to fructose-6-phosphate. In Clostridium botulinum (strain Hall / ATCC 3502 / NCTC 13319 / Type A), this protein is Glucose-6-phosphate isomerase.